The primary structure comprises 120 residues: UPF0102 protein TWT_455 (120 aa).

It belongs to the UPF0102 family.

In Tropheryma whipplei (strain Twist) (Whipple's bacillus), this protein is UPF0102 protein TWT_455.